The sequence spans 148 residues: Large ribosomal subunit protein uL15 (148 aa).

Residues 14–54 (HRKKRVGCGEGGGHGKTSGRGGKGQTARSGSSIRPGFEGGQ) are disordered. Over residues 21–37 (CGEGGGHGKTSGRGGKG) the composition is skewed to gly residues.

This sequence belongs to the universal ribosomal protein uL15 family. As to quaternary structure, part of the 50S ribosomal subunit.

Binds to the 23S rRNA. This Opitutus terrae (strain DSM 11246 / JCM 15787 / PB90-1) protein is Large ribosomal subunit protein uL15.